We begin with the raw amino-acid sequence, 81 residues long: ATP synthase subunit c, chloroplastic (81 aa).

The next 2 membrane-spanning stretches (helical) occupy residues 3 to 23 (AIVS…AAIG) and 57 to 77 (LAFM…LLFA).

This sequence belongs to the ATPase C chain family. F-type ATPases have 2 components, F(1) - the catalytic core - and F(0) - the membrane proton channel. F(1) has five subunits: alpha(3), beta(3), gamma(1), delta(1), epsilon(1). F(0) has four main subunits: a(1), b(1), b'(1) and c(10-14). The alpha and beta chains form an alternating ring which encloses part of the gamma chain. F(1) is attached to F(0) by a central stalk formed by the gamma and epsilon chains, while a peripheral stalk is formed by the delta, b and b' chains.

The protein resides in the plastid. It localises to the chloroplast thylakoid membrane. Its function is as follows. F(1)F(0) ATP synthase produces ATP from ADP in the presence of a proton or sodium gradient. F-type ATPases consist of two structural domains, F(1) containing the extramembraneous catalytic core and F(0) containing the membrane proton channel, linked together by a central stalk and a peripheral stalk. During catalysis, ATP synthesis in the catalytic domain of F(1) is coupled via a rotary mechanism of the central stalk subunits to proton translocation. Key component of the F(0) channel; it plays a direct role in translocation across the membrane. A homomeric c-ring of between 10-14 subunits forms the central stalk rotor element with the F(1) delta and epsilon subunits. This chain is ATP synthase subunit c, chloroplastic, found in Cyanidioschyzon merolae (strain NIES-3377 / 10D) (Unicellular red alga).